Consider the following 304-residue polypeptide: Probable endonuclease 4 (304 aa).

Residues His75, His115, Glu151, Asp185, His188, His221, Asp234, His236, and Glu266 each contribute to the Zn(2+) site.

It belongs to the AP endonuclease 2 family. It depends on Zn(2+) as a cofactor.

The catalysed reaction is Endonucleolytic cleavage to 5'-phosphooligonucleotide end-products.. Functionally, endonuclease IV plays a role in DNA repair. It cleaves phosphodiester bonds at apurinic or apyrimidinic (AP) sites, generating a 3'-hydroxyl group and a 5'-terminal sugar phosphate. This is Probable endonuclease 4 from Ureaplasma urealyticum serovar 10 (strain ATCC 33699 / Western).